Here is a 264-residue protein sequence, read N- to C-terminus: 2-C-methyl-D-erythritol 4-phosphate cytidylyltransferase (264 aa).

Positions 234-264 (ARDPESAHPQSSVLASAFSGPGSRVSGPEEI) are disordered.

Belongs to the IspD/TarI cytidylyltransferase family. IspD subfamily.

It carries out the reaction 2-C-methyl-D-erythritol 4-phosphate + CTP + H(+) = 4-CDP-2-C-methyl-D-erythritol + diphosphate. It participates in isoprenoid biosynthesis; isopentenyl diphosphate biosynthesis via DXP pathway; isopentenyl diphosphate from 1-deoxy-D-xylulose 5-phosphate: step 2/6. In terms of biological role, catalyzes the formation of 4-diphosphocytidyl-2-C-methyl-D-erythritol from CTP and 2-C-methyl-D-erythritol 4-phosphate (MEP). This is 2-C-methyl-D-erythritol 4-phosphate cytidylyltransferase from Xanthomonas euvesicatoria pv. vesicatoria (strain 85-10) (Xanthomonas campestris pv. vesicatoria).